The chain runs to 186 residues: MNCPLLTIKAAAKLITEGGVLAYPTEAVYGLGCDPLNKDAFQQLLRLKQRPLEKGVILIASSIAQIEPFVKLHNQAWTEKVLASWQVLNQPVTWVLPATDNVPEWITGGRNTVAVRVTQHPDVMALCNQLNFPIVSTSANLSGEDPVTTMEACCKAFPALAIMQGNLMGISAPSQIWEAQTQKRLR.

Positions Leu5 to Arg186 constitute a YrdC-like domain.

Belongs to the SUA5 family. TsaC subfamily.

The protein localises to the cytoplasm. The enzyme catalyses L-threonine + hydrogencarbonate + ATP = L-threonylcarbamoyladenylate + diphosphate + H2O. Functionally, required for the formation of a threonylcarbamoyl group on adenosine at position 37 (t(6)A37) in tRNAs that read codons beginning with adenine. Catalyzes the conversion of L-threonine, HCO(3)(-)/CO(2) and ATP to give threonylcarbamoyl-AMP (TC-AMP) as the acyladenylate intermediate, with the release of diphosphate. In Hydrogenovibrio crunogenus (strain DSM 25203 / XCL-2) (Thiomicrospira crunogena), this protein is Threonylcarbamoyl-AMP synthase.